The sequence spans 428 residues: MGCCLTVGPNEALVVSGACCGSDAKTYVVGGWAWAWWLISDTQRITLEIMTLQPKCEDVETAEGVAITVTGVAQVKVMTDQDLLAVACEQFLGKSVMEIKAVVLQTLEGHLRSILGTLTVEQIYQDRDEFARLVREVAAPDVGRMGIEILSFTIKDVYDKLDYLSSLGKTQTAAVQRDADIGVAEAERDAGIREAECKKEMMDVKFLADTRMADSKRELELQKAAFNQEVNTKKAESQLAYELEAAKEQQKIRLEEIEIEVVQRKKQISIEEKEIERTEKELIATVKRPAEAEAYKMQQLAEGQKLKKVLIAQAESEKIRKIGEAEAISISSVGKAEAESMRLKAEAYQQYGEAAKTALVLEALPKIAGKVAAPLARTNEIVILSGDGSRVSGEVNRLLAELPVSINALTGVDLSKMPLLQKMTGAQA.

Residues C4, C19, and C20 are each lipidated (S-palmitoyl cysteine).

It belongs to the band 7/mec-2 family. Flotillin subfamily. Heterooligomeric complex of flotillins 1 and 2. In terms of processing, palmitoylation may be required for the formation of higher order complexes and for neurite outgrowth in cultured neural stem cells. As to expression, normally expressed in growing retinal exons of newly differentiated ganglion cells at the retinal margin. After optic nerve injury, expressed in all retinal ganglion cells and retinal axons. Also expressed in endothelial cells, spinal cord, larval and adult skin, muscle processes, thymus and gill macrophages.

It is found in the membrane. Its subcellular location is the endosome. May play a role in axon growth and regeneration. May be involved in epidermal cell adhesion and epidermal structure and function. The chain is Flotillin-2 (flot2) from Carassius auratus (Goldfish).